The primary structure comprises 535 residues: CTP synthase (535 aa).

The segment at Met-1–Leu-267 is amidoligase domain. Residue Ser-13 participates in CTP binding. Residue Ser-13 coordinates UTP. Ser-14–Ile-19 is an ATP binding site. Tyr-54 is a binding site for L-glutamine. Asp-71 is an ATP binding site. Mg(2+) contacts are provided by Asp-71 and Glu-141. CTP is bound by residues Asp-148 to Glu-150, Lys-188 to Gln-193, and Lys-224. Residues Lys-188–Gln-193 and Lys-224 contribute to the UTP site. Residue Arg-240–Ala-242 coordinates ATP. One can recognise a Glutamine amidotransferase type-1 domain in the interval Lys-292 to Ser-534. Position 354 (Gly-354) interacts with L-glutamine. The active-site Nucleophile; for glutamine hydrolysis is Cys-381. L-glutamine-binding positions include Leu-382–Gln-385, Glu-405, and Arg-462. Active-site residues include His-507 and Glu-509.

This sequence belongs to the CTP synthase family. In terms of assembly, homotetramer.

It catalyses the reaction UTP + L-glutamine + ATP + H2O = CTP + L-glutamate + ADP + phosphate + 2 H(+). The catalysed reaction is L-glutamine + H2O = L-glutamate + NH4(+). It carries out the reaction UTP + NH4(+) + ATP = CTP + ADP + phosphate + 2 H(+). It participates in pyrimidine metabolism; CTP biosynthesis via de novo pathway; CTP from UDP: step 2/2. With respect to regulation, allosterically activated by GTP, when glutamine is the substrate; GTP has no effect on the reaction when ammonia is the substrate. The allosteric effector GTP functions by stabilizing the protein conformation that binds the tetrahedral intermediate(s) formed during glutamine hydrolysis. Inhibited by the product CTP, via allosteric rather than competitive inhibition. Catalyzes the ATP-dependent amination of UTP to CTP with either L-glutamine or ammonia as the source of nitrogen. Regulates intracellular CTP levels through interactions with the four ribonucleotide triphosphates. In Bacillus cereus (strain AH820), this protein is CTP synthase.